Consider the following 204-residue polypeptide: Urease accessory protein UreG (204 aa).

12-19 (GPVGSGKT) lines the GTP pocket.

This sequence belongs to the SIMIBI class G3E GTPase family. UreG subfamily. Homodimer. UreD, UreF and UreG form a complex that acts as a GTP-hydrolysis-dependent molecular chaperone, activating the urease apoprotein by helping to assemble the nickel containing metallocenter of UreC. The UreE protein probably delivers the nickel.

It localises to the cytoplasm. Facilitates the functional incorporation of the urease nickel metallocenter. This process requires GTP hydrolysis, probably effectuated by UreG. This chain is Urease accessory protein UreG, found in Pseudomonas paraeruginosa (strain DSM 24068 / PA7) (Pseudomonas aeruginosa (strain PA7)).